Reading from the N-terminus, the 411-residue chain is NADH-quinone oxidoreductase subunit D 2 (411 aa).

Belongs to the complex I 49 kDa subunit family. In terms of assembly, NDH-1 is composed of 14 different subunits. Subunits NuoB, C, D, E, F, and G constitute the peripheral sector of the complex.

The protein resides in the cell membrane. It carries out the reaction a quinone + NADH + 5 H(+)(in) = a quinol + NAD(+) + 4 H(+)(out). Functionally, NDH-1 shuttles electrons from NADH, via FMN and iron-sulfur (Fe-S) centers, to quinones in the respiratory chain. The immediate electron acceptor for the enzyme in this species is believed to be ubiquinone. Couples the redox reaction to proton translocation (for every two electrons transferred, four hydrogen ions are translocated across the cytoplasmic membrane), and thus conserves the redox energy in a proton gradient. This chain is NADH-quinone oxidoreductase subunit D 2, found in Chloroflexus aurantiacus (strain ATCC 29366 / DSM 635 / J-10-fl).